An 88-amino-acid polypeptide reads, in one-letter code: Conotoxin tx9a (88 aa).

The signal sequence occupies residues 1–27 (MHLSLARSAVLMLLLLFALGNFVVVQS). The propeptide occupies 28–58 (GQITRDVDNGQLTDNRRNLQSKWKPVSLYMS). 3 cysteine pairs are disulfide-bonded: cysteine 62–cysteine 76, cysteine 66–cysteine 78, and cysteine 72–cysteine 83. 4-carboxyglutamate; partial occurs at positions 68 and 73. Asparagine 87 carries the asparagine amide modification.

Post-translationally, exists in 4 different forms, depending on gamma-carboxyglutamations. Tx9a-EE does not contain gamma-carboxyglutamate, tx9a-E/gamma has one gamma-carboxyglutamate at position 73, tx9a-gamma/E has one gamma-carboxyglutamate at position 68, and tx9a-agmma/gamma has two gamma-carboxyglutamates at positions 68 and 73. As to expression, expressed by the venom duct. All different gamma-carboxyalted forms are mostly present in part 2, part 3 and part 4 of the venom duct. They are also found in part 1 (proximal part near the venom bulb) and part 5, but in lower quantity.

It localises to the secreted. Neurotoxin. In vivo, intracranial injection into mice of 10 pmol/g of the peptide induces running in circles and hyperactivity. At higher doses (50 pmol/g), the mice exhibit running and climbing symptoms for close to one hour. Between 130 and 150 pmol/g, characteristic 'spasmodic' symptomatology is elicited. A hand clap would make mice jump high and start running rapidly. When exposed to a loud hand clap, or if the cage cover were dropped, the mice lose motor control and exhibit seizure-like symptoms from which they eventually recover. At the highest doses tested (over 250 pmol/g), after the characteristic spasmodic symptomatology, lethality occurs. Injection of a similar dose range intramuscularly into Siamese fighting fish elicited no unusual symptomatology. This Conus textile (Cloth-of-gold cone) protein is Conotoxin tx9a.